The sequence spans 469 residues: Ectonucleoside triphosphate diphosphohydrolase 5 (469 aa).

An N-terminal signal peptide occupies residues 1–24 (MATPWGAVFFLLMIACAGSTVFYR). Glutamate 172 acts as the Proton acceptor in catalysis. Asparagine 232 is a glycosylation site (N-linked (GlcNAc...) asparagine). Disulfide bonds link cysteine 272-cysteine 303 and cysteine 363-cysteine 377.

The protein belongs to the GDA1/CD39 NTPase family. Monomer; active form. Homodimer; disulfide-linked. Homodimers are enzymatically inactive. Ca(2+) is required as a cofactor. Requires Mg(2+) as cofactor. In terms of processing, N-glycosylated; high-mannose type. As to expression, expressed in fetal cells and most adult tissues.

The protein resides in the endoplasmic reticulum. The protein localises to the secreted. The enzyme catalyses a ribonucleoside 5'-diphosphate + H2O = a ribonucleoside 5'-phosphate + phosphate + H(+). It carries out the reaction GDP + H2O = GMP + phosphate + H(+). It catalyses the reaction UDP + H2O = UMP + phosphate + H(+). The catalysed reaction is IDP + H2O = IMP + phosphate + H(+). The enzyme catalyses CDP + H2O = CMP + phosphate + H(+). It carries out the reaction ADP + H2O = AMP + phosphate + H(+). It functions in the pathway protein modification; protein glycosylation. In terms of biological role, hydrolyzes nucleoside diphosphates with a preference for GDP, IDP and UDP compared to ADP and CDP. In the lumen of the endoplasmic reticulum, hydrolyzes UDP that acts as an end-product feedback inhibitor of the UDP-Glc:glycoprotein glucosyltransferases. UMP can be transported back by an UDP-sugar antiporter to the cytosol where it is consumed to regenerate UDP-glucose. Therefore, it positively regulates protein reglucosylation by clearing UDP from the ER lumen and by promoting the regeneration of UDP-glucose. Protein reglucosylation is essential to proper glycoprotein folding and quality control in the ER. The polypeptide is Ectonucleoside triphosphate diphosphohydrolase 5 (ENTPD5) (Mesocricetus auratus (Golden hamster)).